Here is a 210-residue protein sequence, read N- to C-terminus: Somatotropin (210 aa).

The signal sequence occupies residues 1-22 (MGQVFLLMPVLLVSCFLSQGAA). H38 provides a ligand contact to Zn(2+). C71 and C183 form a disulfide bridge. E192 is a Zn(2+) binding site. A disulfide bridge connects residues C200 and C208.

The protein belongs to the somatotropin/prolactin family.

It localises to the secreted. Its function is as follows. Growth hormone plays an important role in growth control and is involved in the regulation of several anabolic processes. Implicated as an osmoregulatory substance important for seawater adaptation. This is Somatotropin (gh) from Salmo salar (Atlantic salmon).